The following is a 220-amino-acid chain: Putative amino-acid transporter YisU (220 aa).

6 consecutive transmembrane segments (helical) span residues 15-35, 67-87, 89-109, 128-148, 161-181, and 195-215; these read FFSM…ILPL, TLLI…LPVF, TVMM…TWNI, AFAA…IGVI, WLFM…LAIA, and MLIV…YFGV.

Belongs to the LysE/ArgO transporter (TC 2.A.75) family.

The protein resides in the cell membrane. The protein is Putative amino-acid transporter YisU (yisU) of Bacillus subtilis (strain 168).